A 281-amino-acid polypeptide reads, in one-letter code: UPF0162 protein PD_0709 (281 aa).

TPR repeat units lie at residues 193 to 226 (VRIL…VPNQ) and 227 to 260 (PEAL…YPST).

The protein belongs to the UPF0162 family.

In Xylella fastidiosa (strain Temecula1 / ATCC 700964), this protein is UPF0162 protein PD_0709.